We begin with the raw amino-acid sequence, 186 residues long: MSVTSIMDDLKRRMHGAISAFKHELGGLRTGRASASLLEPLTVEAYGSVVHINQVANISVPEPRMLSVSVWDKTMVGAVERAIRDSGLGLNPITDGMNLRIPLPELNEERRKELVKIAHQYAEQARVATRHVRRDGMDNLKKLEKEGEIGQDEAHGLSEKVQKLTDETIADIDKILAVKESEIMHV.

This sequence belongs to the RRF family.

Its subcellular location is the cytoplasm. In terms of biological role, responsible for the release of ribosomes from messenger RNA at the termination of protein biosynthesis. May increase the efficiency of translation by recycling ribosomes from one round of translation to another. In Bartonella henselae (strain ATCC 49882 / DSM 28221 / CCUG 30454 / Houston 1) (Rochalimaea henselae), this protein is Ribosome-recycling factor.